Reading from the N-terminus, the 117-residue chain is Colipase (117 aa).

Positions 1-22 (MNIFNILLPIVVLLLVFGLTAA) are cleaved as a signal peptide. Disulfide bonds link cysteine 39–cysteine 50, cysteine 45–cysteine 61, cysteine 49–cysteine 83, cysteine 71–cysteine 91, and cysteine 85–cysteine 109.

The protein belongs to the colipase family. Forms a 1:1 stoichiometric complex with pancreatic lipase.

Its subcellular location is the secreted. Functionally, colipase is a cofactor of pancreatic lipase. It allows the lipase to anchor itself to the lipid-water interface. Without colipase the enzyme is washed off by bile salts, which have an inhibitory effect on the lipase. The protein is Colipase (clps) of Xenopus tropicalis (Western clawed frog).